The primary structure comprises 686 residues: Disintegrin and metalloproteinase domain-containing protein 17 homolog (686 aa).

A signal peptide spans 1–21; sequence MKIQDRSLLIFLVLGILKSDA. Residues 22-177 constitute a propeptide that is removed on maturation; it reads FNTRVKRHAP…RRAIAIPSDR (156 aa). Residues Asn59, Asn206, and Asn262 are each glycosylated (N-linked (GlcNAc...) asparagine). At 178 to 637 the chain is on the extracellular side; the sequence is RKDVLNVKRN…TGGVLEFIKT (460 aa). The 259-residue stretch at 187–445 folds into the Peptidase M12B domain; sequence NRCTLKLVAD…KWESCFQEEM (259 aa). 2 disulfide bridges follow: Cys328/Cys440 and Cys394/Cys424. Zn(2+) is bound at residue His370. Residue Glu371 is part of the active site. 2 residues coordinate Zn(2+): His374 and His380. The 90-residue stretch at 446 to 535 folds into the Disintegrin domain; it reads TSFCGNGIVE…ECPSAPPVRD (90 aa). The N-linked (GlcNAc...) asparagine glycan is linked to Asn501. The cysteines at positions 506 and 527 are disulfide-linked. N-linked (GlcNAc...) asparagine glycosylation occurs at Asn581. A helical membrane pass occupies residues 638–658; that stretch reads HIVVIAIIFFTLIFVGIYKIV. At 659-686 the chain is on the cytoplasmic side; the sequence is KYGENFTEKVTHKTAGGCRSVFVKADVN.

Zn(2+) serves as cofactor.

It is found in the cell membrane. Metalloprotease. Acts together with protease sup-17 to facilitate lin-12/Notch signaling during developmental cell fate decision, including anchor cell/ventral uterine precursor cell decision. By modulating glp-1/Notch signaling, plays a role in germline development. The chain is Disintegrin and metalloproteinase domain-containing protein 17 homolog from Caenorhabditis elegans.